The following is a 909-amino-acid chain: DNA mismatch repair protein MutS (909 aa).

Residue Gly-614 to Ser-621 coordinates ATP. The segment at Leu-798–Ile-827 is disordered. The span at Ser-818–Ile-827 shows a compositional bias: basic and acidic residues.

It belongs to the DNA mismatch repair MutS family.

Its function is as follows. This protein is involved in the repair of mismatches in DNA. It is possible that it carries out the mismatch recognition step. This protein has a weak ATPase activity. The sequence is that of DNA mismatch repair protein MutS from Clostridium novyi (strain NT).